The primary structure comprises 614 residues: UvrABC system protein C (614 aa).

In terms of domain architecture, GIY-YIG spans 14 to 91; that stretch reads TSPGCYIHKD…IKENKPKYNI (78 aa). The UVR domain occupies 196 to 231; sequence DKIIDDLKSKMAVAAQSMEFERAAEYRDLIQAIGTL. Residues 595-614 are disordered; sequence LSQVAEERVDYQTEGNHNEP. The segment covering 599–614 has biased composition (basic and acidic residues); that stretch reads AEERVDYQTEGNHNEP.

It belongs to the UvrC family. Interacts with UvrB in an incision complex.

It localises to the cytoplasm. Functionally, the UvrABC repair system catalyzes the recognition and processing of DNA lesions. UvrC both incises the 5' and 3' sides of the lesion. The N-terminal half is responsible for the 3' incision and the C-terminal half is responsible for the 5' incision. In Streptococcus pneumoniae serotype 2 (strain D39 / NCTC 7466), this protein is UvrABC system protein C.